A 158-amino-acid chain; its full sequence is Phosphopantetheine adenylyltransferase (158 aa).

Thr-9 provides a ligand contact to substrate. ATP is bound by residues 9–10 (TF) and His-17. Residues Lys-41, Leu-73, and Arg-87 each coordinate substrate. ATP is bound by residues 88-90 (GLR), Glu-98, and 123-129 (YAYISSS).

This sequence belongs to the bacterial CoaD family. Homohexamer. The cofactor is Mg(2+).

The protein localises to the cytoplasm. It catalyses the reaction (R)-4'-phosphopantetheine + ATP + H(+) = 3'-dephospho-CoA + diphosphate. The protein operates within cofactor biosynthesis; coenzyme A biosynthesis; CoA from (R)-pantothenate: step 4/5. Reversibly transfers an adenylyl group from ATP to 4'-phosphopantetheine, yielding dephospho-CoA (dPCoA) and pyrophosphate. This Allochromatium vinosum (strain ATCC 17899 / DSM 180 / NBRC 103801 / NCIMB 10441 / D) (Chromatium vinosum) protein is Phosphopantetheine adenylyltransferase.